Here is a 208-residue protein sequence, read N- to C-terminus: V-type ATP synthase subunit D (208 aa).

The protein belongs to the V-ATPase D subunit family.

Functionally, produces ATP from ADP in the presence of a proton gradient across the membrane. The polypeptide is V-type ATP synthase subunit D (Streptococcus pyogenes serotype M6 (strain ATCC BAA-946 / MGAS10394)).